A 430-amino-acid polypeptide reads, in one-letter code: MANLWKKQRLRDTGLCRLGILFAVTLSIVLMLVSVPRTALNGSSIDDDLDGLDKDLEAKLNASLLSVARGNRMSLRLHRRNHFSPRNTDLFPDLAKDRVVIVLYVHNRAQYFRVTVESLSKVKGISETLLIVSHDGYFEEMNRIVESIKFCQVKQIFSPYSPHIYRTSFPGVTLNDCKNKGDEAKGHCEGNPDQYGNHRSPKIVSLKHHWWWMMNTVWDGLEETKGHEGHILFIEEDHFLFPNAYRNIQTLTRLKPAKCPDCFAANLAPSDVKSRGEGLESLVAERMGNVGYSFNRSVWENIHQKAREFCFFDDYNWDITMWATVFPSFGSPVYTLRGPRTSAVHFGKCGLHQGRGDEGDCIDNGVVNIEVKETDKVVNIKEGWGVRVYKHQAGYKAGFEGWGGWGDDRDRHLCLDFATMYRYSSSSASP.

The Cytoplasmic segment spans residues 1–12 (MANLWKKQRLRD). Residues 13 to 35 (TGLCRLGILFAVTLSIVLMLVSV) form a helical; Signal-anchor for type II membrane protein membrane-spanning segment. The Lumenal portion of the chain corresponds to 36–430 (PRTALNGSSI…YRYSSSSASP (395 aa)). Asn-41 and Asn-61 each carry an N-linked (GlcNAc...) asparagine glycan. Substrate contacts are provided by residues 104-108 (YVHNR) and Asp-135. Cysteines 177 and 188 form a disulfide. 205–209 (SLKHH) contributes to the substrate binding site. Asp-237 is a binding site for Mn(2+). An intrachain disulfide couples Cys-259 to Cys-262. The N-linked (GlcNAc...) asparagine glycan is linked to Asn-295. A disulfide bridge connects residues Cys-310 and Cys-414. A Mn(2+)-binding site is contributed by His-345.

It belongs to the glycosyltransferase 16 (GT16) protein family. Mn(2+) is required as a cofactor.

It is found in the golgi apparatus membrane. The catalysed reaction is an N(4)-{beta-D-GlcNAc-(1-&gt;2)-alpha-D-Man-(1-&gt;3)-[alpha-D-Man-(1-&gt;6)]-beta-D-Man-(1-&gt;4)-beta-D-GlcNAc-(1-&gt;4)-beta-D-GlcNAc}-L-asparaginyl-[protein] + UDP-N-acetyl-alpha-D-glucosamine = N(4)-{beta-D-GlcNAc-(1-&gt;2)-alpha-D-Man-(1-&gt;3)-[beta-D-GlcNAc-(1-&gt;2)-alpha-D-Man-(1-&gt;6)]-beta-D-Man-(1-&gt;4)-beta-D-GlcNAc-(1-&gt;4)-beta-D-GlcNAc}-L-asparaginyl-[protein] + UDP + H(+). It participates in protein modification; protein glycosylation. Its function is as follows. Catalyzes an essential step in the conversion of oligo-mannose and hybrid to complex N-glycans. The polypeptide is Alpha-1,6-mannosyl-glycoprotein 2-beta-N-acetylglucosaminyltransferase (Arabidopsis thaliana (Mouse-ear cress)).